The chain runs to 465 residues: MGDLRSQPLLRAVLGGLLAGLAPGVAGPLSMLPALALLWSLVERPRDAALWGLFGVLLSHRWLLGLHPLTWMGLPAWLSLPVAVAIWLSCGVAAALLLLLWSLLARLCRRRDGTWRFGAVLLLALVWGAAELLLEGSPLFWIGVGGSVLPLDRPLAGLGRWLGSGGLATLQLLWGWGLWQLWRRRGRRCAWWLISLLLAHAMGALSLSPPPALAALRLGAWQPAIPTREKFSPERQRRFQSALSSALQQAQSLKVEALVAPEGTLPFRWQADEDPLPVPLISGGFRWVRGQQRSSVLLARPDRAGVEPLVDKHRLVPLGEWLPPLPAGLTRGLSAVGGLQPGDASRFVNVWPSPFAVAICYEISDGRALAKATAQGAEWLLTIANLDPYPQLLQRQFLALAQLRAIETGRDVLSVANTGPTALVSADGTVQRLLEPQTDAVAAAELQRRQQLTGYSRLVWAWSSR.

6 consecutive transmembrane segments (helical) span residues 12–32 (AVLG…LSML), 49–69 (ALWG…LHPL), 80–100 (LPVA…LLLL), 122–142 (LLAL…LFWI), 161–181 (WLGS…LWQL), and 189–209 (CAWW…SLSP). The 228-residue stretch at 221–448 (WQPAIPTREK…DAVAAAELQR (228 aa)) folds into the CN hydrolase domain. The active-site Proton acceptor is Glu262. The active site involves Lys312. Cys360 acts as the Nucleophile in catalysis.

Belongs to the CN hydrolase family. Apolipoprotein N-acyltransferase subfamily.

It localises to the cell inner membrane. The catalysed reaction is N-terminal S-1,2-diacyl-sn-glyceryl-L-cysteinyl-[lipoprotein] + a glycerophospholipid = N-acyl-S-1,2-diacyl-sn-glyceryl-L-cysteinyl-[lipoprotein] + a 2-acyl-sn-glycero-3-phospholipid + H(+). The protein operates within protein modification; lipoprotein biosynthesis (N-acyl transfer). Its function is as follows. Catalyzes the phospholipid dependent N-acylation of the N-terminal cysteine of apolipoprotein, the last step in lipoprotein maturation. The sequence is that of Apolipoprotein N-acyltransferase from Parasynechococcus marenigrum (strain WH8102).